The following is a 94-amino-acid chain: Non-specific lipid-transfer protein C4 (94 aa).

The N-terminal stretch at 1–26 is a signal peptide; that stretch reads MAASKGNAAAAACALVLVLLAVGAEA. Cystine bridges form between C34–C72, C44–C59, C60–C85, and C70–C92. N-linked (GlcNAc...) asparagine glycosylation occurs at N91.

It belongs to the plant LTP family.

In terms of biological role, lipid-transfer protein that may be regulated by the transcription factor UDT1 in developing anthers and play a role in tapetum development. The protein is Non-specific lipid-transfer protein C4 of Oryza sativa subsp. japonica (Rice).